Here is a 723-residue protein sequence, read N- to C-terminus: Probable alpha-fucosidase A (723 aa).

Positions M1 to A15 are cleaved as a signal peptide. N77, N98, N117, N171, N194, N243, N334, N558, N566, and N595 each carry an N-linked (GlcNAc...) asparagine glycan.

The protein belongs to the glycosyl hydrolase 95 family.

Its subcellular location is the secreted. The enzyme catalyses an alpha-L-fucoside + H2O = L-fucose + an alcohol. Its function is as follows. Alpha-fucosidase involved in degradation of fucosylated xyloglucans. Hydrolyzes alpha-1,2-linked fucose. This Aspergillus oryzae (strain ATCC 42149 / RIB 40) (Yellow koji mold) protein is Probable alpha-fucosidase A (afcA).